The sequence spans 185 residues: Transcription antitermination protein NusB (185 aa).

The protein belongs to the NusB family.

In terms of biological role, involved in transcription antitermination. Required for transcription of ribosomal RNA (rRNA) genes. Binds specifically to the boxA antiterminator sequence of the ribosomal RNA (rrn) operons. This chain is Transcription antitermination protein NusB, found in Rhodospirillum rubrum (strain ATCC 11170 / ATH 1.1.1 / DSM 467 / LMG 4362 / NCIMB 8255 / S1).